A 349-amino-acid polypeptide reads, in one-letter code: tRNA pseudouridine synthase D (349 aa).

Position 27 (Phe27) interacts with substrate. Asp80 functions as the Nucleophile in the catalytic mechanism. Position 129 (Asn129) interacts with substrate. A TRUD domain is found at 155 to 303 (GVPNYFGAQR…VEAARRAMLL (149 aa)). Residue Phe329 coordinates substrate.

It belongs to the pseudouridine synthase TruD family.

The enzyme catalyses uridine(13) in tRNA = pseudouridine(13) in tRNA. Its function is as follows. Responsible for synthesis of pseudouridine from uracil-13 in transfer RNAs. The chain is tRNA pseudouridine synthase D from Enterobacter sp. (strain 638).